The following is a 229-amino-acid chain: MKKITIAIDGFSSCGKSTMAKDLAREVGYIYIDSGAMYRAVTLYSIENGIFNGDVIDTEKLKEAIRDIRITFRPNPETGRPDTYLNGVNVENKIRTMGVSSKVSPISALDFVREAMVAQQQAMGKEKGIVMDGRDIGTTVFPDAELKIFVTATPEIRAQRRFDELKAKGQEGSFEEILENVKQRDYIDQHREVSPLRKADDALLLDNSNLSIEQQKEWLSEQFGKVVKE.

Residue 10-18 (GFSSCGKST) participates in ATP binding.

Belongs to the cytidylate kinase family. Type 1 subfamily.

The protein resides in the cytoplasm. The catalysed reaction is CMP + ATP = CDP + ADP. The enzyme catalyses dCMP + ATP = dCDP + ADP. The polypeptide is Cytidylate kinase (Bacteroides thetaiotaomicron (strain ATCC 29148 / DSM 2079 / JCM 5827 / CCUG 10774 / NCTC 10582 / VPI-5482 / E50)).